The following is a 142-amino-acid chain: Large ribosomal subunit protein uL11 (142 aa).

This sequence belongs to the universal ribosomal protein uL11 family. In terms of assembly, part of the ribosomal stalk of the 50S ribosomal subunit. Interacts with L10 and the large rRNA to form the base of the stalk. L10 forms an elongated spine to which L12 dimers bind in a sequential fashion forming a multimeric L10(L12)X complex. In terms of processing, one or more lysine residues are methylated.

Functionally, forms part of the ribosomal stalk which helps the ribosome interact with GTP-bound translation factors. The chain is Large ribosomal subunit protein uL11 from Leptospira borgpetersenii serovar Hardjo-bovis (strain JB197).